Here is a 290-residue protein sequence, read N- to C-terminus: ATP synthase gamma chain (290 aa).

This sequence belongs to the ATPase gamma chain family. F-type ATPases have 2 components, CF(1) - the catalytic core - and CF(0) - the membrane proton channel. CF(1) has five subunits: alpha(3), beta(3), gamma(1), delta(1), epsilon(1). CF(0) has three main subunits: a, b and c.

It is found in the cell inner membrane. Produces ATP from ADP in the presence of a proton gradient across the membrane. The gamma chain is believed to be important in regulating ATPase activity and the flow of protons through the CF(0) complex. The polypeptide is ATP synthase gamma chain (Amoebophilus asiaticus (strain 5a2)).